The chain runs to 447 residues: N-succinylarginine dihydrolase (447 aa).

Residues 19–28 (AGLSFGNEAS), Asn-110, and 137–138 (HR) contribute to the substrate site. Residue Glu-174 is part of the active site. Substrate is bound at residue Arg-213. The active site involves His-249. The substrate site is built by Asp-251 and Asn-364. Residue Cys-370 is the Nucleophile of the active site.

This sequence belongs to the succinylarginine dihydrolase family. As to quaternary structure, homodimer.

The enzyme catalyses N(2)-succinyl-L-arginine + 2 H2O + 2 H(+) = N(2)-succinyl-L-ornithine + 2 NH4(+) + CO2. It functions in the pathway amino-acid degradation; L-arginine degradation via AST pathway; L-glutamate and succinate from L-arginine: step 2/5. Functionally, catalyzes the hydrolysis of N(2)-succinylarginine into N(2)-succinylornithine, ammonia and CO(2). The sequence is that of N-succinylarginine dihydrolase from Yersinia pseudotuberculosis serotype O:1b (strain IP 31758).